A 317-amino-acid chain; its full sequence is Putative 2-hydroxyacid dehydrogenase SAR2389 (317 aa).

NAD(+)-binding positions include 155-156 (EI), 234-236 (ASR), and Asp260. Residue Arg236 is part of the active site. The active site involves Glu265. The Proton donor role is filled by His283. 283-286 (HIGN) serves as a coordination point for NAD(+).

It belongs to the D-isomer specific 2-hydroxyacid dehydrogenase family.

The polypeptide is Putative 2-hydroxyacid dehydrogenase SAR2389 (Staphylococcus aureus (strain MRSA252)).